A 236-amino-acid chain; its full sequence is Small ribosomal subunit protein eS6 (236 aa).

It belongs to the eukaryotic ribosomal protein eS6 family. In terms of assembly, component of the small ribosomal subunit. Part of the small subunit (SSU) processome, composed of more than 70 proteins and the RNA chaperone small nucleolar RNA (snoRNA) U3. Ribosomal protein S6 is the major substrate of protein kinases in eukaryote ribosomes.

It is found in the cytoplasm. It localises to the nucleus. The protein localises to the nucleolus. In terms of biological role, component of the 40S small ribosomal subunit. Plays an important role in controlling cell growth and proliferation through the selective translation of particular classes of mRNA. Part of the small subunit (SSU) processome, first precursor of the small eukaryotic ribosomal subunit. During the assembly of the SSU processome in the nucleolus, many ribosome biogenesis factors, an RNA chaperone and ribosomal proteins associate with the nascent pre-rRNA and work in concert to generate RNA folding, modifications, rearrangements and cleavage as well as targeted degradation of pre-ribosomal RNA by the RNA exosome. The chain is Small ribosomal subunit protein eS6 (rps6) from Dictyostelium discoideum (Social amoeba).